The sequence spans 307 residues: MRKIILCSPRGFCAGVIRAIQTVEVALEKWGRPIYVKHEIVHNRHVVDKLREKGAIFIEDLQEVPRNSRVIFSAHGVPPSVREEAAERGLIAIDATCGLVTKVHSAVKMYAKKGYHIILIGKRKHVEIIGIRGEAPDQITVVENIAEVEALPFSAQDPLFYVTQTTLSMDDAADIVAALKARYPRIFTLPSSSICYATQNRQGALRNILPQVDFVYVIGDSQSSNSNRLREVAERRGVTARLVNHPDEVTEEILQYSGNIGITAGASTPEDVVQACLMKLQELIPDLSIEMDLFVEEDTVFQLPKEL.

Residue Cys-13 coordinates [4Fe-4S] cluster. 2 residues coordinate (2E)-4-hydroxy-3-methylbut-2-enyl diphosphate: His-42 and His-75. 2 residues coordinate dimethylallyl diphosphate: His-42 and His-75. Residues His-42 and His-75 each contribute to the isopentenyl diphosphate site. Residue Cys-97 coordinates [4Fe-4S] cluster. (2E)-4-hydroxy-3-methylbut-2-enyl diphosphate is bound at residue His-125. A dimethylallyl diphosphate-binding site is contributed by His-125. Isopentenyl diphosphate is bound at residue His-125. The active-site Proton donor is the Glu-127. Residue Thr-165 participates in (2E)-4-hydroxy-3-methylbut-2-enyl diphosphate binding. Cys-195 provides a ligand contact to [4Fe-4S] cluster. Residues Ser-223, Ser-224, Asn-225, and Ser-267 each coordinate (2E)-4-hydroxy-3-methylbut-2-enyl diphosphate. The dimethylallyl diphosphate site is built by Ser-223, Ser-224, Asn-225, and Ser-267. Residues Ser-223, Ser-224, Asn-225, and Ser-267 each coordinate isopentenyl diphosphate.

Belongs to the IspH family. Requires [4Fe-4S] cluster as cofactor.

It carries out the reaction isopentenyl diphosphate + 2 oxidized [2Fe-2S]-[ferredoxin] + H2O = (2E)-4-hydroxy-3-methylbut-2-enyl diphosphate + 2 reduced [2Fe-2S]-[ferredoxin] + 2 H(+). The catalysed reaction is dimethylallyl diphosphate + 2 oxidized [2Fe-2S]-[ferredoxin] + H2O = (2E)-4-hydroxy-3-methylbut-2-enyl diphosphate + 2 reduced [2Fe-2S]-[ferredoxin] + 2 H(+). It functions in the pathway isoprenoid biosynthesis; dimethylallyl diphosphate biosynthesis; dimethylallyl diphosphate from (2E)-4-hydroxy-3-methylbutenyl diphosphate: step 1/1. Its pathway is isoprenoid biosynthesis; isopentenyl diphosphate biosynthesis via DXP pathway; isopentenyl diphosphate from 1-deoxy-D-xylulose 5-phosphate: step 6/6. In terms of biological role, catalyzes the conversion of 1-hydroxy-2-methyl-2-(E)-butenyl 4-diphosphate (HMBPP) into a mixture of isopentenyl diphosphate (IPP) and dimethylallyl diphosphate (DMAPP). Acts in the terminal step of the DOXP/MEP pathway for isoprenoid precursor biosynthesis. The sequence is that of 4-hydroxy-3-methylbut-2-enyl diphosphate reductase from Chlamydia trachomatis serovar A (strain ATCC VR-571B / DSM 19440 / HAR-13).